The following is a 216-amino-acid chain: Protein-L-isoaspartate O-methyltransferase (216 aa).

The active site involves S63.

It belongs to the methyltransferase superfamily. L-isoaspartyl/D-aspartyl protein methyltransferase family.

The protein localises to the cytoplasm. It carries out the reaction [protein]-L-isoaspartate + S-adenosyl-L-methionine = [protein]-L-isoaspartate alpha-methyl ester + S-adenosyl-L-homocysteine. Its function is as follows. Catalyzes the methyl esterification of L-isoaspartyl residues in peptides and proteins that result from spontaneous decomposition of normal L-aspartyl and L-asparaginyl residues. It plays a role in the repair and/or degradation of damaged proteins. This Rhodopseudomonas palustris (strain BisB18) protein is Protein-L-isoaspartate O-methyltransferase.